A 190-amino-acid polypeptide reads, in one-letter code: Nucleoside triphosphate pyrophosphatase (190 aa).

Residue Asp-69 is the Proton acceptor of the active site.

The protein belongs to the Maf family. A divalent metal cation is required as a cofactor.

Its subcellular location is the cytoplasm. It carries out the reaction a ribonucleoside 5'-triphosphate + H2O = a ribonucleoside 5'-phosphate + diphosphate + H(+). The enzyme catalyses a 2'-deoxyribonucleoside 5'-triphosphate + H2O = a 2'-deoxyribonucleoside 5'-phosphate + diphosphate + H(+). In terms of biological role, nucleoside triphosphate pyrophosphatase. May have a dual role in cell division arrest and in preventing the incorporation of modified nucleotides into cellular nucleic acids. This chain is Nucleoside triphosphate pyrophosphatase, found in Helicobacter pylori (strain Shi470).